A 265-amino-acid chain; its full sequence is Triosephosphate isomerase (265 aa).

13 to 15 (NWK) is a binding site for substrate. Catalysis depends on His106, which acts as the Electrophile. The active-site Proton acceptor is the Glu179. Substrate-binding positions include Gly185, Ser223, and 244-245 (GG).

Belongs to the triosephosphate isomerase family. As to quaternary structure, homodimer.

The protein localises to the cytoplasm. The enzyme catalyses D-glyceraldehyde 3-phosphate = dihydroxyacetone phosphate. It functions in the pathway carbohydrate biosynthesis; gluconeogenesis. The protein operates within carbohydrate degradation; glycolysis; D-glyceraldehyde 3-phosphate from glycerone phosphate: step 1/1. Involved in the gluconeogenesis. Catalyzes stereospecifically the conversion of dihydroxyacetone phosphate (DHAP) to D-glyceraldehyde-3-phosphate (G3P). In Acinetobacter baylyi (strain ATCC 33305 / BD413 / ADP1), this protein is Triosephosphate isomerase.